The sequence spans 309 residues: Beta-ketoacyl-[acyl-carrier-protein] synthase III (309 aa).

Active-site residues include cysteine 111 and histidine 236. Residues 237–241 (QANVR) are ACP-binding. Residue asparagine 266 is part of the active site.

It belongs to the thiolase-like superfamily. FabH family. As to quaternary structure, homodimer.

It localises to the cytoplasm. It carries out the reaction malonyl-[ACP] + acetyl-CoA + H(+) = 3-oxobutanoyl-[ACP] + CO2 + CoA. It participates in lipid metabolism; fatty acid biosynthesis. Catalyzes the condensation reaction of fatty acid synthesis by the addition to an acyl acceptor of two carbons from malonyl-ACP. Catalyzes the first condensation reaction which initiates fatty acid synthesis and may therefore play a role in governing the total rate of fatty acid production. Possesses both acetoacetyl-ACP synthase and acetyl transacylase activities. Its substrate specificity determines the biosynthesis of branched-chain and/or straight-chain of fatty acids. The sequence is that of Beta-ketoacyl-[acyl-carrier-protein] synthase III from Aquifex aeolicus (strain VF5).